We begin with the raw amino-acid sequence, 195 residues long: Interferon omega-1 (195 aa).

The signal sequence occupies residues 1–23 (MAFVLSLLMALVLVSYGPGGSLG). Disulfide bonds link C24–C122 and C52–C162.

Belongs to the alpha/beta interferon family.

Its subcellular location is the secreted. The protein is Interferon omega-1 (IFNW1) of Bos taurus (Bovine).